Reading from the N-terminus, the 67-residue chain is Small ribosomal subunit protein eS31 (67 aa).

Zn(2+)-binding residues include C31, C34, C49, and C52. The C4-type zinc-finger motif lies at 31–52 (CPKCGAGVFMAEHLNRFACGKC).

Belongs to the eukaryotic ribosomal protein eS31 family. In terms of assembly, part of the 30S ribosomal subunit. It depends on Zn(2+) as a cofactor.

The polypeptide is Small ribosomal subunit protein eS31 (Methanococcus maripaludis (strain DSM 14266 / JCM 13030 / NBRC 101832 / S2 / LL)).